An 843-amino-acid chain; its full sequence is Glycogen phosphorylase, brain form (843 aa).

The residue at position 2 (A2) is an N-acetylalanine. Residue S15 is modified to Phosphoserine; by PHK; in form phosphorylase A. AMP is bound by residues D43, Y197, and R310. The residue at position 197 (Y197) is a Phosphotyrosine. Y473 is modified (phosphotyrosine). K569 is a pyridoxal 5'-phosphate binding site. Positions T677 to G678 are pyridoxal 5'-phosphate. An N6-(pyridoxal phosphate)lysine modification is found at K681.

It belongs to the glycogen phosphorylase family. Homodimer. Dimers associate into a tetramer to form the enzymatically active phosphorylase A. Pyridoxal 5'-phosphate is required as a cofactor. In terms of processing, phosphorylation of Ser-15 converts phosphorylase B (unphosphorylated) to phosphorylase A.

It catalyses the reaction [(1-&gt;4)-alpha-D-glucosyl](n) + phosphate = [(1-&gt;4)-alpha-D-glucosyl](n-1) + alpha-D-glucose 1-phosphate. Activity of phosphorylase is controlled both by allosteric means (through the non-covalent binding of metabolites) and by covalent modification. Thus AMP allosterically activates, whereas ATP, ADP, and glucose-6-phosphate allosterically inhibit, phosphorylase B. Functionally, glycogen phosphorylase that regulates glycogen mobilization. Phosphorylase is an important allosteric enzyme in carbohydrate metabolism. Enzymes from different sources differ in their regulatory mechanisms and in their natural substrates. However, all known phosphorylases share catalytic and structural properties. The sequence is that of Glycogen phosphorylase, brain form (PYGB) from Bos taurus (Bovine).